A 497-amino-acid polypeptide reads, in one-letter code: Validamine 7-phosphate valienyltransferase (497 aa).

Residue Asp158 participates in GDP-valienol binding. His182 is a validamine 7-phosphate binding site. Residues Arg290, Lys295, Arg321, 325 to 326 (NR), 361 to 362 (ND), and Thr366 contribute to the GDP-valienol site. 383 to 386 (DGQN) serves as a coordination point for validamine 7-phosphate. Residues 387-388 (LS) and Glu391 each bind GDP-valienol.

The protein belongs to the glycosyltransferase 20 family. Homodimer.

It catalyses the reaction validamine 7-phosphate + GDP-valienol = validoxylamine A 7'-phosphate + GDP + H(+). Its function is as follows. Involved in the biosynthesis of the antifungal agent validamycin A. Catalyzes the condensation between GDP-valienol and validamine 7-phosphate via a nonglycosidic C-N bond formation to yield validoxylamine A 7'-phosphate. This is Validamine 7-phosphate valienyltransferase from Streptomyces hygroscopicus subsp. limoneus.